Here is a 362-residue protein sequence, read N- to C-terminus: Protein-glutamate methylesterase/protein-glutamine glutaminase 1 (362 aa).

The Response regulatory domain occupies 10–127 (RVLVVDDSSF…ADAQRVFREE (118 aa)). The residue at position 61 (Asp-61) is a 4-aspartylphosphate. Residues 163 to 357 (PRPSQALAGK…LPLTQIGSEI (195 aa)) enclose the CheB-type methylesterase domain. Residues Ser-181, His-208, and Asp-306 contribute to the active site.

This sequence belongs to the CheB family. In terms of processing, phosphorylated by CheA. Phosphorylation of the N-terminal regulatory domain activates the methylesterase activity.

Its subcellular location is the cytoplasm. It carries out the reaction [protein]-L-glutamate 5-O-methyl ester + H2O = L-glutamyl-[protein] + methanol + H(+). The enzyme catalyses L-glutaminyl-[protein] + H2O = L-glutamyl-[protein] + NH4(+). Involved in chemotaxis. Part of a chemotaxis signal transduction system that modulates chemotaxis in response to various stimuli. Catalyzes the demethylation of specific methylglutamate residues introduced into the chemoreceptors (methyl-accepting chemotaxis proteins or MCP) by CheR. Also mediates the irreversible deamidation of specific glutamine residues to glutamic acid. The chain is Protein-glutamate methylesterase/protein-glutamine glutaminase 1 from Geobacter sulfurreducens (strain ATCC 51573 / DSM 12127 / PCA).